The following is a 122-amino-acid chain: Prefoldin subunit 1 (122 aa).

N-acetylalanine is present on A2.

The protein belongs to the prefoldin subunit beta family. Heterohexamer of two PFD-alpha type and four PFD-beta type subunits.

In terms of biological role, binds specifically to cytosolic chaperonin (c-CPN) and transfers target proteins to it. Binds to nascent polypeptide chain and promotes folding in an environment in which there are many competing pathways for nonnative proteins. The polypeptide is Prefoldin subunit 1 (PFDN1) (Homo sapiens (Human)).